The primary structure comprises 90 residues: Large ribosomal subunit protein bL27 (90 aa).

A disordered region spans residues 1–24; that stretch reads MAHKKGTGSTRNGRDSNSKRLGVK.

Belongs to the bacterial ribosomal protein bL27 family.

The chain is Large ribosomal subunit protein bL27 from Prochlorococcus marinus (strain NATL1A).